A 701-amino-acid chain; its full sequence is Polyribonucleotide nucleotidyltransferase (701 aa).

Asp487 and Asp493 together coordinate Mg(2+). The KH domain maps to 554-613; that stretch reads PTMIAMKIDTDKIRDVIGKGGATIRAICEETKASIDIEDDGSIKIFGESKEAAEAARQRV. Residues 623–691 enclose the S1 motif domain; it reads GKIYVGKVER…NRGRIKLSIK (69 aa).

This sequence belongs to the polyribonucleotide nucleotidyltransferase family. Component of the RNA degradosome, which is a multiprotein complex involved in RNA processing and mRNA degradation. Mg(2+) is required as a cofactor.

Its subcellular location is the cytoplasm. The catalysed reaction is RNA(n+1) + phosphate = RNA(n) + a ribonucleoside 5'-diphosphate. Functionally, involved in mRNA degradation. Catalyzes the phosphorolysis of single-stranded polyribonucleotides processively in the 3'- to 5'-direction. The chain is Polyribonucleotide nucleotidyltransferase from Pseudomonas savastanoi pv. phaseolicola (strain 1448A / Race 6) (Pseudomonas syringae pv. phaseolicola (strain 1448A / Race 6)).